A 424-amino-acid chain; its full sequence is Zinc finger and BTB domain-containing protein 6 (424 aa).

Residues 33–97 (CDVSIYINDT…CYTGALEVKR (65 aa)) enclose the BTB domain. Ser202 bears the Phosphoserine mark. C2H2-type zinc fingers lie at residues 301–323 (HQCP…LKMH), 326–348 (FLCL…IRGH), 354–376 (FQCT…LNIH), and 382–405 (YKCH…TSVH). The segment at 402–424 (TSVHGRSSGEKLSRPDLKRQSLL) is disordered. Residues 408 to 424 (SSGEKLSRPDLKRQSLL) are compositionally biased toward basic and acidic residues.

Widely expressed with highest levels in brain.

The protein resides in the nucleus. Functionally, may be involved in transcriptional regulation. The protein is Zinc finger and BTB domain-containing protein 6 (ZBTB6) of Homo sapiens (Human).